Consider the following 175-residue polypeptide: Two-on-two hemoglobin-3 (175 aa).

Y85 and H98 together coordinate heme. A disordered region spans residues 153 to 175; that stretch reads QNEKPKHKPQCACKHAANKPAEE.

Belongs to the truncated hemoglobin family. Group II subfamily. In terms of assembly, homodimer when ferric. Interacts with RGLG3 and RGLG4. Requires heme as cofactor. In terms of tissue distribution, expressed ubiquitously, with higher levels in root tissue than in shoot tissue.

In terms of biological role, hemoglobin-like protein that exhibits an unusual concentration-independent binding of O(2) and CO. May promote shoot organogenesis from root explants in vitro. Inhibits RGLG3 and RGLG4 ubiquitination activity. The chain is Two-on-two hemoglobin-3 (GLB3) from Arabidopsis thaliana (Mouse-ear cress).